We begin with the raw amino-acid sequence, 255 residues long: Pimeloyl-[acyl-carrier protein] methyl ester esterase (255 aa).

In terms of domain architecture, AB hydrolase-1 spans 16–242 (LVLLHGWGMN…SSHAPFITEP (227 aa)). Substrate contacts are provided by residues Trp22, 82 to 83 (SL), and 143 to 147 (FMALQ). Ser82 acts as the Nucleophile in catalysis. Catalysis depends on residues Asp207 and His235. A substrate-binding site is contributed by His235.

It belongs to the AB hydrolase superfamily. Carboxylesterase BioH family. Monomer.

The protein resides in the cytoplasm. It catalyses the reaction 6-carboxyhexanoyl-[ACP] methyl ester + H2O = 6-carboxyhexanoyl-[ACP] + methanol + H(+). It participates in cofactor biosynthesis; biotin biosynthesis. Its function is as follows. The physiological role of BioH is to remove the methyl group introduced by BioC when the pimeloyl moiety is complete. It allows to synthesize pimeloyl-ACP via the fatty acid synthetic pathway through the hydrolysis of the ester bonds of pimeloyl-ACP esters. The polypeptide is Pimeloyl-[acyl-carrier protein] methyl ester esterase (Vibrio vulnificus (strain YJ016)).